Consider the following 368-residue polypeptide: 3-dehydroquinate synthase (368 aa).

Residues 71–76, 105–109, 129–130, Lys142, Lys151, and 169–172 contribute to the NAD(+) site; these read DGEAFK, GVVGD, TT, and TLRT. Zn(2+) is bound by residues Glu184, His247, and His264.

It belongs to the sugar phosphate cyclases superfamily. Dehydroquinate synthase family. It depends on Co(2+) as a cofactor. Requires Zn(2+) as cofactor. NAD(+) is required as a cofactor.

It localises to the cytoplasm. It catalyses the reaction 7-phospho-2-dehydro-3-deoxy-D-arabino-heptonate = 3-dehydroquinate + phosphate. The protein operates within metabolic intermediate biosynthesis; chorismate biosynthesis; chorismate from D-erythrose 4-phosphate and phosphoenolpyruvate: step 2/7. Its function is as follows. Catalyzes the conversion of 3-deoxy-D-arabino-heptulosonate 7-phosphate (DAHP) to dehydroquinate (DHQ). The sequence is that of 3-dehydroquinate synthase from Cupriavidus taiwanensis (strain DSM 17343 / BCRC 17206 / CCUG 44338 / CIP 107171 / LMG 19424 / R1) (Ralstonia taiwanensis (strain LMG 19424)).